A 293-amino-acid polypeptide reads, in one-letter code: METESRAQSTNQTQTDSLSPSPNPVSPVPLNNPTSGPRYGTVIPNRIFVGGIDFKTNENDLRKFFSQYGSVKEVKIVNDRAGVSKGYGFITFETQEDAQKILQEAEKLNYKDKKLNIGPAIRKQQVGIPRSSLMPAAGTMYLTTSTGYPYTYHNGVAYFHTPEVTSVPPSWPSRSISSSPVMVAQPVYQQPAYHYQAPAQCLPGQWQWGVPQSPASSAPFLYLQPSEVIYQPVEIAQDGGCVPPPLSLMETSVPEPYSDHGVQAAYHQVYASSAIAMPAPMMQPEPIKVRSLF.

A compositionally biased stretch (polar residues) spans 1–16 (METESRAQSTNQTQTD). A disordered region spans residues 1-39 (METESRAQSTNQTQTDSLSPSPNPVSPVPLNNPTSGPRY). Phosphoserine occurs at positions 19, 21, and 26. Residues 45 to 122 (NRIFVGGIDF…KKLNIGPAIR (78 aa)) enclose the RRM domain. In terms of domain architecture, DAZ spans 172–196 (PSRSISSSPVMVAQPVYQQPAYHYQ).

It belongs to the RRM DAZ family. In terms of assembly, interacts with DAZ1 and DAZL. As to expression, testis specific. Not expressed in early embryos, primoridal germ cells and spermatogonial cells. First expressed in the cytoplasm of spermatocytes and then persists through meiosis.

The protein localises to the cytoplasm. Functionally, probable RNA-binding protein, which may be required during spermatogenesis. May act by binding to the 3'-UTR of mRNAs and regulating their translation. This is Protein boule-like from Mus musculus (Mouse).